A 197-amino-acid polypeptide reads, in one-letter code: Nucleoside triphosphate pyrophosphatase (197 aa).

D71 (proton acceptor) is an active-site residue.

Belongs to the Maf family. The cofactor is a divalent metal cation.

It is found in the cytoplasm. It carries out the reaction a ribonucleoside 5'-triphosphate + H2O = a ribonucleoside 5'-phosphate + diphosphate + H(+). It catalyses the reaction a 2'-deoxyribonucleoside 5'-triphosphate + H2O = a 2'-deoxyribonucleoside 5'-phosphate + diphosphate + H(+). Its function is as follows. Nucleoside triphosphate pyrophosphatase. May have a dual role in cell division arrest and in preventing the incorporation of modified nucleotides into cellular nucleic acids. This Synechococcus sp. (strain JA-3-3Ab) (Cyanobacteria bacterium Yellowstone A-Prime) protein is Nucleoside triphosphate pyrophosphatase.